A 664-amino-acid polypeptide reads, in one-letter code: Lamin tail domain-containing protein 2 (664 aa).

The tract at residues 1 to 40 (MAPKSCQESEDKQVSPAPAGVQPDSSDLGSPVGTPVDRVA) is disordered. The stretch at 118–169 (QDKFLRNQVQKLTLELKAQKEQAQQEKQQLEEKLQQNLWAKQQLEAELQTFQ) forms a coiled coil. Residues 245-260 (SDQKQSQPPTSETYTL) are compositionally biased toward polar residues. 2 disordered regions span residues 245–272 (SDQKQSQPPTSETYTLDSEGATKHTEKP) and 286–329 (TSSS…MQEH). Residues 286 to 298 (TSSSERTQSDTSS) are compositionally biased toward low complexity. Polar residues predominate over residues 312–325 (GHPSQGTNLASSEQ). Residues 362 to 481 (PYTRPQLNPF…QVLSEHQATP (120 aa)) enclose the LTD domain. Residues 504 to 563 (SESEPDVHPGEQQCRPSSPQKGRAKDAGARRKKPGPGVRQHRHSSTSGLRASRTLHPTET) form a disordered region. The segment covering 533–547 (RRKKPGPGVRQHRHS) has biased composition (basic residues).

The protein is Lamin tail domain-containing protein 2 (Lmntd2) of Mus musculus (Mouse).